The sequence spans 507 residues: Maturase K (507 aa).

It belongs to the intron maturase 2 family. MatK subfamily.

It is found in the plastid. Its subcellular location is the chloroplast. Functionally, usually encoded in the trnK tRNA gene intron. Probably assists in splicing its own and other chloroplast group II introns. In Fagopyrum esculentum (Common buckwheat), this protein is Maturase K.